A 160-amino-acid chain; its full sequence is D-aminoacyl-tRNA deacylase (160 aa).

A Gly-cisPro motif, important for rejection of L-amino acids motif is present at residues Gly-146–Pro-147.

Belongs to the DTD family. As to quaternary structure, homodimer.

It localises to the cytoplasm. It catalyses the reaction glycyl-tRNA(Ala) + H2O = tRNA(Ala) + glycine + H(+). It carries out the reaction a D-aminoacyl-tRNA + H2O = a tRNA + a D-alpha-amino acid + H(+). An aminoacyl-tRNA editing enzyme that deacylates mischarged D-aminoacyl-tRNAs. Also deacylates mischarged glycyl-tRNA(Ala), protecting cells against glycine mischarging by AlaRS. Acts via tRNA-based rather than protein-based catalysis; rejects L-amino acids rather than detecting D-amino acids in the active site. By recycling D-aminoacyl-tRNA to D-amino acids and free tRNA molecules, this enzyme counteracts the toxicity associated with the formation of D-aminoacyl-tRNA entities in vivo and helps enforce protein L-homochirality. This is D-aminoacyl-tRNA deacylase from Desulfovibrio desulfuricans (strain ATCC 27774 / DSM 6949 / MB).